Here is a 230-residue protein sequence, read N- to C-terminus: Uracil-DNA glycosylase (230 aa).

Residue D70 is the Proton acceptor of the active site.

Belongs to the uracil-DNA glycosylase (UDG) superfamily. UNG family.

Its subcellular location is the cytoplasm. It carries out the reaction Hydrolyzes single-stranded DNA or mismatched double-stranded DNA and polynucleotides, releasing free uracil.. Functionally, excises uracil residues from the DNA which can arise as a result of misincorporation of dUMP residues by DNA polymerase or due to deamination of cytosine. This chain is Uracil-DNA glycosylase, found in Pseudomonas savastanoi pv. phaseolicola (strain 1448A / Race 6) (Pseudomonas syringae pv. phaseolicola (strain 1448A / Race 6)).